The sequence spans 246 residues: Ribonuclease PH (246 aa).

Residues Arg91 and 129–131 (GTR) contribute to the phosphate site.

It belongs to the RNase PH family. In terms of assembly, homohexameric ring arranged as a trimer of dimers.

It catalyses the reaction tRNA(n+1) + phosphate = tRNA(n) + a ribonucleoside 5'-diphosphate. Functionally, phosphorolytic 3'-5' exoribonuclease that plays an important role in tRNA 3'-end maturation. Removes nucleotide residues following the 3'-CCA terminus of tRNAs; can also add nucleotides to the ends of RNA molecules by using nucleoside diphosphates as substrates, but this may not be physiologically important. Probably plays a role in initiation of 16S rRNA degradation (leading to ribosome degradation) during starvation. In Burkholderia ambifaria (strain ATCC BAA-244 / DSM 16087 / CCUG 44356 / LMG 19182 / AMMD) (Burkholderia cepacia (strain AMMD)), this protein is Ribonuclease PH.